The sequence spans 340 residues: tRNA N6-adenosine threonylcarbamoyltransferase (340 aa).

Fe cation contacts are provided by histidine 111 and histidine 115. Substrate-binding positions include 133-137 (VVSGG), aspartate 166, glycine 179, aspartate 183, and asparagine 273. Aspartate 301 serves as a coordination point for Fe cation.

The protein belongs to the KAE1 / TsaD family. The cofactor is Fe(2+).

It localises to the cytoplasm. The enzyme catalyses L-threonylcarbamoyladenylate + adenosine(37) in tRNA = N(6)-L-threonylcarbamoyladenosine(37) in tRNA + AMP + H(+). Required for the formation of a threonylcarbamoyl group on adenosine at position 37 (t(6)A37) in tRNAs that read codons beginning with adenine. Is involved in the transfer of the threonylcarbamoyl moiety of threonylcarbamoyl-AMP (TC-AMP) to the N6 group of A37, together with TsaE and TsaB. TsaD likely plays a direct catalytic role in this reaction. This Pelobacter propionicus (strain DSM 2379 / NBRC 103807 / OttBd1) protein is tRNA N6-adenosine threonylcarbamoyltransferase.